The chain runs to 398 residues: MRPGGALLALLASLLLLLLLRLLWCPADAPGRARILVEESREATHGTPAALRTLRSPATAVPRATNSTYLNEKSLQLTEKCKNLQYGIESFSNKTKGYSENDYLQIITDIQSCPWKRQAEEYANFRAKLASCCDAVQNFVVSQNNTPVGTNMSYEVESKKEIPIKKNIFHMFPVSQPFVDYPYNQCAVVGNGGILNKSLCGTEIDKSDFVFRCNLPPTTGDVSKDVGSKTNLVTINPSIITLKYGNLKEKKALFLEDIATYGDAFFLLPAFSFRANTGTSFKVYYTLEESKARQKVLFFHPKYLKDLALFWRTKGVTAYRLSTGLMITSVAVELCKNVKLYGFWPFSKTVEDIPVSHHYYDNKLPKHGFHQMPKEYSQILQLHMKGILKLQFSKCEVA.

The Cytoplasmic segment spans residues 1-3 (MRP). Residues 4-24 (GGALLALLASLLLLLLLRLLW) traverse the membrane as a helical; Signal-anchor for type II membrane protein segment. The Lumenal segment spans residues 25–398 (CPADAPGRAR…KLQFSKCEVA (374 aa)). N-linked (GlcNAc...) asparagine glycosylation is found at N66, N93, N151, and N196. 2 cysteine pairs are disulfide-bonded: C186–C335 and C200–C395. Residues N214, 236-238 (NPS), and 322-324 (STG) contribute to the substrate site. The Proton donor/acceptor role is filled by H370.

This sequence belongs to the glycosyltransferase 29 family.

Its subcellular location is the golgi apparatus membrane. It catalyses the reaction a ganglioside GM3 + CMP-N-acetyl-beta-neuraminate = a ganglioside GD3 + CMP + H(+). It carries out the reaction a ganglioside GM3 (d18:1(4E)) + CMP-N-acetyl-beta-neuraminate = a ganglioside GD3 (d18:1(4E)) + CMP + H(+). The catalysed reaction is a ganglioside GD1a (d18:1(4E)) + CMP-N-acetyl-beta-neuraminate = a ganglioside GT1a (d18:1(4E)) + CMP + H(+). The enzyme catalyses a ganglioside GD1a + CMP-N-acetyl-beta-neuraminate = a ganglioside GT1a + CMP + H(+). It catalyses the reaction a ganglioside GM1b (d18:1(4E)) + CMP-N-acetyl-beta-neuraminate = a ganglioside GD1c (d18:1(4E)) + CMP + H(+). It carries out the reaction a ganglioside GM1b + CMP-N-acetyl-beta-neuraminate = a ganglioside GD1c + CMP + H(+). The catalysed reaction is a ganglioside GM4 (d18:1(4E)) + CMP-N-acetyl-beta-neuraminate = an N-acetyl-alpha-neuraminosyl-(2-&gt;8)-N-acetyl-alpha-neuraminosyl-(2-&gt;3)-beta-D-galactosyl-(1&lt;-&gt;1')-N-acylsphing-4-enine + CMP + H(+). The enzyme catalyses N-acetyl-alpha-neuraminosyl-(2-&gt;3)-beta-D-galactosyl-(1&lt;-&gt;1')-ceramide + CMP-N-acetyl-beta-neuraminate = N-acetyl-alpha-neuraminosyl-(2-&gt;8)-N-acetyl-alpha-neuraminosyl-(2-&gt;3)-beta-D-galactosyl-(1&lt;-&gt;1')-ceramide + CMP + H(+). It catalyses the reaction a ganglioside GT1b (d18:1(4E)) + CMP-N-acetyl-beta-neuraminate = a ganglioside GQ1b (d18:1(4E)) + CMP + H(+). It carries out the reaction a ganglioside GT1b + CMP-N-acetyl-beta-neuraminate = a ganglioside GQ1b + CMP + H(+). It participates in protein modification; protein glycosylation. Its function is as follows. Alpha-2,8-sialyltransferase that prefers O-glycans to N-glycans or glycolipids as acceptor substrates. The minimal acceptor substrate is the NeuAc-alpha-2,3(6)-Gal sequence at the non-reducing end of their carbohydrate groups. This chain is Alpha-2,8-sialyltransferase 8F, found in Homo sapiens (Human).